The following is a 690-amino-acid chain: Glycine--tRNA ligase beta subunit (690 aa).

This sequence belongs to the class-II aminoacyl-tRNA synthetase family. Tetramer of two alpha and two beta subunits.

The protein resides in the cytoplasm. The enzyme catalyses tRNA(Gly) + glycine + ATP = glycyl-tRNA(Gly) + AMP + diphosphate. This chain is Glycine--tRNA ligase beta subunit, found in Syntrophus aciditrophicus (strain SB).